The chain runs to 499 residues: MASINRPIVFFTVCLFLLCDGSLAQQLLGQSTSQWQSSRRGSPRGCRFDRLQAFEPIRSVRSQAGTTEFFDVSNELFQCTGVSVVRRVIEPRGLLLPHYTNGASLVYIIQGRGITGPTFPGCPETYQQQFQQSGQAQLTESQSQSHKFKDEHQKIHRFRQGDVIALPAGVAHWCYNDGEVPVVAIYVTDINNGANQLDPRQRDFLLAGNKRNPQAYRREVEEWSQNIFSGFSTELLSEAFGISNQVARQLQCQNDQRGEIVRVERGLSLLQPYASLQEQEQGQMQSREHYQEGGYQQSQYGSGCPNGLDETFCTMRVRQNIDNPNRADTYNPRAGRVTNLNSQNFPILNLVQMSAVKVNLYQNALLSPFWNINAHSIVYITQGRAQVQVVNNNGKTVFNGELRRGQLLIVPQHYVVVKKAQREGCAYIAFKTNPNSMVSHIAGKSSIFRALPTDVLANAYRISREEAQRLKHNRGDEFGAFTPLQYKSYQDVYNVAESS.

The signal sequence occupies residues 1-24 (MASINRPIVFFTVCLFLLCDGSLA). 2 cysteine pairs are disulfide-bonded: Cys46/Cys79 and Cys122/Cys313. Residues 51-248 (LQAFEPIRSV…AFGISNQVAR (198 aa)) form the Cupin type-1 1 domain. The segment at 280–300 (EQGQMQSREHYQEGGYQQSQY) is disordered. Residues 319-468 (QNIDNPNRAD…AYRISREEAQ (150 aa)) form the Cupin type-1 2 domain.

The protein belongs to the 11S seed storage protein (globulins) family. As to quaternary structure, hexamer; each subunit is composed of an acidic and a basic chain derived from a single precursor and linked by a disulfide bond.

In terms of biological role, seed storage protein. This chain is Glutelin type-A 2 (GLUA2), found in Oryza sativa subsp. japonica (Rice).